Consider the following 356-residue polypeptide: Stomatin-like protein 2, mitochondrial (356 aa).

The N-terminal 28 residues, 1-28 (MLARAARGTGALLLKGSVQASARAPRRA), are a transit peptide targeting the mitochondrion. Position 17 is a phosphoserine; by PKC/PRKCZ (S17). Y124 carries the post-translational modification Phosphotyrosine. K145 is modified (N6-acetyllysine; alternate). K145 carries the N6-succinyllysine; alternate modification. The stretch at 215 to 252 (INVAEGKKQAQILASEAEKAEQINQAAGEASAVLAKAK) forms a coiled coil. K233 is subject to N6-acetyllysine. Positions 326-356 (EAQDSVSSRSSRDVRSTDASLDEELDRVKLS) are disordered. Position 330 is a phosphoserine (S330).

The protein belongs to the band 7/mec-2 family. As to quaternary structure, forms homooligomers. Interacts with MFN2; may form heterooligomers with this mediator of mitochondrial fusion. Interacts with PHB1 and PHB2; stabilizes and recruits them to cardiolipin-enriched mitochondrial membranes. Interacts with CACNA2D2.

Its subcellular location is the cell membrane. The protein resides in the mitochondrion. It is found in the mitochondrion inner membrane. The protein localises to the mitochondrion intermembrane space. It localises to the membrane raft. Its subcellular location is the cytoplasm. The protein resides in the cytoskeleton. Its function is as follows. Mitochondrial protein that probably regulates the biogenesis and the activity of mitochondria. Stimulates cardiolipin biosynthesis, binds cardiolipin-enriched membranes where it recruits and stabilizes some proteins including prohibitin and may therefore act in the organization of functional microdomains in mitochondrial membranes. Through regulation of the mitochondrial function may play a role into several biological processes including cell migration, cell proliferation, T-cell activation, calcium homeostasis and cellular response to stress. May play a role in calcium homeostasis through negative regulation of calcium efflux from mitochondria. Required for mitochondrial hyperfusion a pro-survival cellular response to stress which results in increased ATP production by mitochondria. May also regulate the organization of functional domains at the plasma membrane and play a role in T-cell activation through association with the T-cell receptor signaling complex and its regulation. In Bos taurus (Bovine), this protein is Stomatin-like protein 2, mitochondrial (STOML2).